A 610-amino-acid chain; its full sequence is Menin (610 aa).

The tract at residues 214–390 is interaction with FANCD2; it reads GVAERSWLYL…SLLEAGEERP (177 aa). Positions 460–552 are disordered; the sequence is REAEAAEAEE…SPPPEGPVLT (93 aa). A compositionally biased stretch (basic and acidic residues) spans 484-500; the sequence is RRESKPEEPPPPKKPAL. A phosphoserine mark is found at Ser-487 and Ser-543. Thr-594 carries the phosphothreonine modification.

Component of the MLL-HCF complex, at least composed of KMT2A/MLL1, MEN1, ASH2L, RBBP5, DPY30, WDR5, HCFC1 and HCFC2. Component of the menin-associated histone methyltransferase complex, at least composed of KMT2B/MLL4, MEN1, ASH2L, RBBP5, DPY30 and WDR5. Interacts with POLR2B. Interacts with POLR2A phosphorylated at 'Ser-5', but not with the unphosphorylated, nor 'Ser-2' phosphorylated POLR2A forms. Interacts with FANCD2 and DBF4. Interacts with JUND (via MBM motif); inhibits the interaction of JUND with MAPK10 and the phosphorylation of JUND by MAP kinases MAPK8 and MAPK10. Interacts with SMAD3, but not with SMAD2, nor SMAD4. Directly interacts with NFKB1, NFKB2 and RELA. Interacts with KMT2A (via MBM motif). The KMT2A-MEN1 complex interacts with PSIP1 with a greater affinity as MEN1 enhances interaction of KMT2A with PSIP1. Interacts with the fusion protein KMT2A-MLLT3. Ubiquitous.

The protein localises to the nucleus. In terms of biological role, essential component of a MLL/SET1 histone methyltransferase (HMT) complex, a complex that specifically methylates 'Lys-4' of histone H3 (H3K4). Functions as a transcriptional regulator. Binds to the TERT promoter and represses telomerase expression. Plays a role in TGFB1-mediated inhibition of cell-proliferation, possibly regulating SMAD3 transcriptional activity. Represses JUND-mediated transcriptional activation on AP1 sites, as well as that mediated by NFKB subunit RELA. Positively regulates HOXC8 and HOXC6 gene expression. May be involved in normal hematopoiesis through the activation of HOXA9 expression. May be involved in DNA repair. The chain is Menin (MEN1) from Homo sapiens (Human).